The chain runs to 297 residues: Phosphoribosylaminoimidazole-succinocarboxamide synthase (297 aa).

This sequence belongs to the SAICAR synthetase family.

It catalyses the reaction 5-amino-1-(5-phospho-D-ribosyl)imidazole-4-carboxylate + L-aspartate + ATP = (2S)-2-[5-amino-1-(5-phospho-beta-D-ribosyl)imidazole-4-carboxamido]succinate + ADP + phosphate + 2 H(+). Its pathway is purine metabolism; IMP biosynthesis via de novo pathway; 5-amino-1-(5-phospho-D-ribosyl)imidazole-4-carboxamide from 5-amino-1-(5-phospho-D-ribosyl)imidazole-4-carboxylate: step 1/2. The sequence is that of Phosphoribosylaminoimidazole-succinocarboxamide synthase from Methylobacillus flagellatus (strain ATCC 51484 / DSM 6875 / VKM B-1610 / KT).